Consider the following 161-residue polypeptide: Nucleotide-binding protein Gmet_3206 (161 aa).

Belongs to the YajQ family.

Its function is as follows. Nucleotide-binding protein. This is Nucleotide-binding protein Gmet_3206 from Geobacter metallireducens (strain ATCC 53774 / DSM 7210 / GS-15).